A 232-amino-acid polypeptide reads, in one-letter code: Octanoyltransferase (232 aa).

The region spanning 44-219 (EYTADEIWVV…QLARQFGLVL (176 aa)) is the BPL/LPL catalytic domain. Residues 83-90 (RGGQVTYH), 150-152 (ALG), and 163-165 (GLS) contribute to the substrate site. The active-site Acyl-thioester intermediate is the Cys-181.

The protein belongs to the LipB family.

Its subcellular location is the cytoplasm. The enzyme catalyses octanoyl-[ACP] + L-lysyl-[protein] = N(6)-octanoyl-L-lysyl-[protein] + holo-[ACP] + H(+). The protein operates within protein modification; protein lipoylation via endogenous pathway; protein N(6)-(lipoyl)lysine from octanoyl-[acyl-carrier-protein]: step 1/2. Its function is as follows. Catalyzes the transfer of endogenously produced octanoic acid from octanoyl-acyl-carrier-protein onto the lipoyl domains of lipoate-dependent enzymes. Lipoyl-ACP can also act as a substrate although octanoyl-ACP is likely to be the physiological substrate. The polypeptide is Octanoyltransferase (Xanthomonas axonopodis pv. citri (strain 306)).